The following is a 146-amino-acid chain: Copper transporter 5 (146 aa).

The chain crosses the membrane as a helical span at residues 24–44; sequence WLSYILTLIACFVFSAFYQYL. A disordered region spans residues 55–74; the sequence is SSSRRAPPPPRSSSGVSAPL. Residues 101–121 form a helical membrane-spanning segment; it reads LLMLAAMSFNGGVFIAIVVGL.

It belongs to the copper transporter (Ctr) (TC 1.A.56) family. SLC31A subfamily. Highly expressed in leaves and stems and at lower levels in roots and flowers.

Its subcellular location is the membrane. Functionally, involved in the transport of copper. In Arabidopsis thaliana (Mouse-ear cress), this protein is Copper transporter 5 (COPT5).